Here is a 527-residue protein sequence, read N- to C-terminus: ATP synthase subunit alpha (527 aa).

177–184 (GDRQTGKT) is an ATP binding site.

The protein belongs to the ATPase alpha/beta chains family. As to quaternary structure, F-type ATPases have 2 components, CF(1) - the catalytic core - and CF(0) - the membrane proton channel. CF(1) has five subunits: alpha(3), beta(3), gamma(1), delta(1), epsilon(1). CF(0) has four main subunits: a(1), b(1), b'(1) and c(9-12).

It localises to the cell membrane. The enzyme catalyses ATP + H2O + 4 H(+)(in) = ADP + phosphate + 5 H(+)(out). In terms of biological role, produces ATP from ADP in the presence of a proton gradient across the membrane. The alpha chain is a regulatory subunit. This chain is ATP synthase subunit alpha, found in Roseiflexus sp. (strain RS-1).